The primary structure comprises 143 residues: Peptidyl-prolyl cis-trans isomerase B (143 aa).

Residues 1–143 (MKTGYFLLED…DVMKEVRVEG (143 aa)) form the PPIase cyclophilin-type domain.

It belongs to the cyclophilin-type PPIase family.

The protein resides in the cytoplasm. The enzyme catalyses [protein]-peptidylproline (omega=180) = [protein]-peptidylproline (omega=0). With respect to regulation, inhibited by cyclosporin A (CsA). Its function is as follows. PPIases accelerate the folding of proteins. It catalyzes the cis-trans isomerization of proline imidic peptide bonds in oligopeptides. This chain is Peptidyl-prolyl cis-trans isomerase B (ppiB), found in Bacillus subtilis (strain 168).